Reading from the N-terminus, the 376-residue chain is Pyrimidine monooxygenase RutA (376 aa).

FMN contacts are provided by residues 61–62 (IK), Asn127, Glu136, 152–153 (RY), and Ser202.

Belongs to the NtaA/SnaA/DszA monooxygenase family. RutA subfamily.

The catalysed reaction is uracil + FMNH2 + NADH + O2 = (Z)-3-ureidoacrylate + FMN + NAD(+) + H2O + H(+). The enzyme catalyses thymine + FMNH2 + NADH + O2 = (Z)-2-methylureidoacrylate + FMN + NAD(+) + H2O + H(+). In terms of biological role, catalyzes the pyrimidine ring opening between N-3 and C-4 by an unusual flavin hydroperoxide-catalyzed mechanism, adding oxygen atoms in the process to yield ureidoacrylate peracid, that immediately reacts with FMN forming ureidoacrylate and FMN-N(5)-oxide. The FMN-N(5)-oxide reacts spontaneously with NADH to produce FMN. Requires the flavin reductase RutF to regenerate FMN in vivo. The protein is Pyrimidine monooxygenase RutA of Methylorubrum populi (strain ATCC BAA-705 / NCIMB 13946 / BJ001) (Methylobacterium populi).